A 37-amino-acid polypeptide reads, in one-letter code: Large ribosomal subunit protein bL36 (37 aa).

The protein belongs to the bacterial ribosomal protein bL36 family.

The polypeptide is Large ribosomal subunit protein bL36 (Moorella thermoacetica (strain ATCC 39073 / JCM 9320)).